The primary structure comprises 161 residues: NADH-quinone oxidoreductase subunit I (161 aa).

2 4Fe-4S ferredoxin-type domains span residues 52-82 and 92-121; these read LRRYPDGEERCIACKLCEAICPAQAITIEAK and TKYDIDMTKCIYCGLCQEACPVDAIVEGPN. [4Fe-4S] cluster contacts are provided by Cys62, Cys65, Cys68, Cys72, Cys101, Cys104, Cys107, and Cys111.

Belongs to the complex I 23 kDa subunit family. In terms of assembly, NDH-1 is composed of 14 different subunits. Subunits NuoA, H, J, K, L, M, N constitute the membrane sector of the complex. Requires [4Fe-4S] cluster as cofactor.

It is found in the cell inner membrane. The catalysed reaction is a quinone + NADH + 5 H(+)(in) = a quinol + NAD(+) + 4 H(+)(out). Its function is as follows. NDH-1 shuttles electrons from NADH, via FMN and iron-sulfur (Fe-S) centers, to quinones in the respiratory chain. The immediate electron acceptor for the enzyme in this species is believed to be ubiquinone. Couples the redox reaction to proton translocation (for every two electrons transferred, four hydrogen ions are translocated across the cytoplasmic membrane), and thus conserves the redox energy in a proton gradient. The polypeptide is NADH-quinone oxidoreductase subunit I (Orientia tsutsugamushi (strain Boryong) (Rickettsia tsutsugamushi)).